Consider the following 340-residue polypeptide: Flap endonuclease 1 (340 aa).

An N-domain region spans residues M1–K98. D27, D80, E152, E154, D173, D175, and D236 together coordinate Mg(2+). Residues D116–S258 are I-domain.

It belongs to the XPG/RAD2 endonuclease family. FEN1 subfamily. As to quaternary structure, interacts with PCNA. PCNA stimulates the nuclease activity without altering cleavage specificity. The cofactor is Mg(2+).

Structure-specific nuclease with 5'-flap endonuclease and 5'-3' exonuclease activities involved in DNA replication and repair. During DNA replication, cleaves the 5'-overhanging flap structure that is generated by displacement synthesis when DNA polymerase encounters the 5'-end of a downstream Okazaki fragment. Binds the unpaired 3'-DNA end and kinks the DNA to facilitate 5' cleavage specificity. Cleaves one nucleotide into the double-stranded DNA from the junction in flap DNA, leaving a nick for ligation. Also involved in the base excision repair (BER) pathway. Acts as a genome stabilization factor that prevents flaps from equilibrating into structures that lead to duplications and deletions. Also possesses 5'-3' exonuclease activity on nicked or gapped double-stranded DNA. The chain is Flap endonuclease 1 from Nitrosopumilus maritimus (strain SCM1).